The following is a 293-amino-acid chain: Small ribosomal subunit biogenesis GTPase RsgA 2 (293 aa).

The 161-residue stretch at Ser63 to Leu223 folds into the CP-type G domain. GTP contacts are provided by residues Thr112–Asp115 and Gly166–Ser174. Zn(2+) contacts are provided by Cys247, Cys252, His254, and Cys260.

Belongs to the TRAFAC class YlqF/YawG GTPase family. RsgA subfamily. In terms of assembly, monomer. Associates with 30S ribosomal subunit, binds 16S rRNA. It depends on Zn(2+) as a cofactor.

The protein localises to the cytoplasm. In terms of biological role, one of several proteins that assist in the late maturation steps of the functional core of the 30S ribosomal subunit. Helps release RbfA from mature subunits. May play a role in the assembly of ribosomal proteins into the subunit. Circularly permuted GTPase that catalyzes slow GTP hydrolysis, GTPase activity is stimulated by the 30S ribosomal subunit. The polypeptide is Small ribosomal subunit biogenesis GTPase RsgA 2 (Oceanobacillus iheyensis (strain DSM 14371 / CIP 107618 / JCM 11309 / KCTC 3954 / HTE831)).